The chain runs to 514 residues: Cytochrome P450 monooxygenase aneD (514 aa).

Residues 6–26 (ICTLLAVIATTSLGLLFLSII) traverse the membrane as a helical segment. N-linked (GlcNAc...) asparagine glycosylation is found at N113, N261, and N347. A heme-binding site is contributed by C424.

It belongs to the cytochrome P450 family. Heme serves as cofactor.

It is found in the membrane. The catalysed reaction is asperaculane D + reduced [NADPH--hemoprotein reductase] + O2 = asperaculane E + oxidized [NADPH--hemoprotein reductase] + H2O + H(+). It participates in secondary metabolite biosynthesis. Cytochrome P450 monooxygenase; part of the gene cluster that mediates the biosynthesis of aculenes, a unique type of norsesquiterpenes that contain a nordaucane skeleton linked to an L-proline moiety and are of mixed biosynthetic origin. The pathway begins with the synthesis of dauca-4,7-diene by the terpene cyclase aneC using farnesyl pyrophosphate (FPP) as substrate. The cytochrome P450 monooxygenase aneF then performs the initial oxidation at C-12 of dauca-4,7-diene to yield asperaculane D. Asperaculane D is substrate of the cytochrome P450 monooxygenase aneD for C-10 hydroxylation to yield asperaculane E. The cytochrome P450 monooxygenase aneG then converts asperaculane E into aculene D via C-2 oxidation. The monomodular nonribosomal peptide synthtase aneB adenylates L-proline and the thiohydrolase aneE transfers this activated L-proline derivative to aculenes D and C to produce respectively aculenes B and A. The dioxygenase aneA converts aculene D into aculene C, and aculene B into aculene A by introducing the 5,6-alkene moiety. Asperculanes A, B, C and F, as well as 14-prolyl asperculane C, might be shunt products of the pathway. In Aspergillus aculeatus (strain ATCC 16872 / CBS 172.66 / WB 5094), this protein is Cytochrome P450 monooxygenase aneD.